The following is a 455-amino-acid chain: Ribulose bisphosphate carboxylase large chain (455 aa).

Residue K5 is modified to N6,N6,N6-trimethyllysine. Substrate contacts are provided by N114 and T164. The active-site Proton acceptor is K166. Residue K168 participates in substrate binding. 3 residues coordinate Mg(2+): K192, D194, and E195. K192 is modified (N6-carboxylysine). The active-site Proton acceptor is the H285. The substrate site is built by R286, H318, and S370.

It belongs to the RuBisCO large chain family. Type I subfamily. Heterohexadecamer of 8 large chains and 8 small chains; disulfide-linked. The disulfide link is formed within the large subunit homodimers. The cofactor is Mg(2+). In terms of processing, the disulfide bond which can form in the large chain dimeric partners within the hexadecamer appears to be associated with oxidative stress and protein turnover.

The protein localises to the plastid. It localises to the chloroplast. It catalyses the reaction 2 (2R)-3-phosphoglycerate + 2 H(+) = D-ribulose 1,5-bisphosphate + CO2 + H2O. The enzyme catalyses D-ribulose 1,5-bisphosphate + O2 = 2-phosphoglycolate + (2R)-3-phosphoglycerate + 2 H(+). Functionally, ruBisCO catalyzes two reactions: the carboxylation of D-ribulose 1,5-bisphosphate, the primary event in carbon dioxide fixation, as well as the oxidative fragmentation of the pentose substrate in the photorespiration process. Both reactions occur simultaneously and in competition at the same active site. This chain is Ribulose bisphosphate carboxylase large chain, found in Lupinus albus (White lupine).